Consider the following 74-residue polypeptide: Protein SlyX homolog (74 aa).

It belongs to the SlyX family.

The protein is Protein SlyX homolog of Neisseria meningitidis serogroup A / serotype 4A (strain DSM 15465 / Z2491).